We begin with the raw amino-acid sequence, 159 residues long: 6,7-dimethyl-8-ribityllumazine synthase (159 aa).

5-amino-6-(D-ribitylamino)uracil is bound by residues Phe-22, Ala-57–Glu-59, and Ala-81–Ile-83. Gly-86–Thr-87 lines the (2S)-2-hydroxy-3-oxobutyl phosphate pocket. The active-site Proton donor is His-89. Phe-114 serves as a coordination point for 5-amino-6-(D-ribitylamino)uracil. Arg-128 contributes to the (2S)-2-hydroxy-3-oxobutyl phosphate binding site.

The protein belongs to the DMRL synthase family. Forms an icosahedral capsid composed of 60 subunits, arranged as a dodecamer of pentamers.

The catalysed reaction is (2S)-2-hydroxy-3-oxobutyl phosphate + 5-amino-6-(D-ribitylamino)uracil = 6,7-dimethyl-8-(1-D-ribityl)lumazine + phosphate + 2 H2O + H(+). It functions in the pathway cofactor biosynthesis; riboflavin biosynthesis; riboflavin from 2-hydroxy-3-oxobutyl phosphate and 5-amino-6-(D-ribitylamino)uracil: step 1/2. Catalyzes the formation of 6,7-dimethyl-8-ribityllumazine by condensation of 5-amino-6-(D-ribitylamino)uracil with 3,4-dihydroxy-2-butanone 4-phosphate. This is the penultimate step in the biosynthesis of riboflavin. The polypeptide is 6,7-dimethyl-8-ribityllumazine synthase (Shewanella baltica (strain OS155 / ATCC BAA-1091)).